Consider the following 427-residue polypeptide: Enolase (427 aa).

(2R)-2-phosphoglycerate is bound at residue glutamine 163. Glutamate 205 functions as the Proton donor in the catalytic mechanism. Mg(2+) contacts are provided by aspartate 242, glutamate 285, and aspartate 312. (2R)-2-phosphoglycerate-binding residues include lysine 337, arginine 366, serine 367, and lysine 388. The active-site Proton acceptor is the lysine 337.

It belongs to the enolase family. It depends on Mg(2+) as a cofactor.

It localises to the cytoplasm. The protein localises to the secreted. It is found in the cell surface. The enzyme catalyses (2R)-2-phosphoglycerate = phosphoenolpyruvate + H2O. It functions in the pathway carbohydrate degradation; glycolysis; pyruvate from D-glyceraldehyde 3-phosphate: step 4/5. Catalyzes the reversible conversion of 2-phosphoglycerate (2-PG) into phosphoenolpyruvate (PEP). It is essential for the degradation of carbohydrates via glycolysis. The protein is Enolase of Bradyrhizobium sp. (strain BTAi1 / ATCC BAA-1182).